The following is a 195-amino-acid chain: MRSASISRKTAETDIAVSVNLDGTGRSNIATGIGFLDHMLDLLARHALFDLDVKVDGDLHIDQHHSAEDCGIALGQAFAKALGDKRGVTRYADIHLPMDEALTRVCVDISGRPFLVFRTTFRVEKIGTFDTELVREWFQAFAMNAGLTLHVETLYGDNAHHIAESCYKGLARALRKAVAIDPREEGRVPSTKGSL.

This sequence belongs to the imidazoleglycerol-phosphate dehydratase family.

The protein localises to the cytoplasm. The catalysed reaction is D-erythro-1-(imidazol-4-yl)glycerol 3-phosphate = 3-(imidazol-4-yl)-2-oxopropyl phosphate + H2O. The protein operates within amino-acid biosynthesis; L-histidine biosynthesis; L-histidine from 5-phospho-alpha-D-ribose 1-diphosphate: step 6/9. The sequence is that of Imidazoleglycerol-phosphate dehydratase from Methylobacterium radiotolerans (strain ATCC 27329 / DSM 1819 / JCM 2831 / NBRC 15690 / NCIMB 10815 / 0-1).